The sequence spans 218 residues: Heart- and neural crest derivatives-expressed protein 1 (218 aa).

3 disordered regions span residues 1–23, 56–112, and 172–203; these read MNLVGSYAHHHHHHHHHHPHPAH, APDF…RTES, and ADGGRESKRKRELQQHEGFPPALGPGEKRIKG. The segment covering 8-21 has biased composition (basic residues); sequence AHHHHHHHHHHPHP. The segment covering 68-92 has biased composition (low complexity); the sequence is AAAAAASYGPDARPGQSPGRLEALG. Positions 95–107 are enriched in basic residues; sequence LGRRKGSGPKKER. Residues 97 to 149 enclose the bHLH domain; it reads RRKGSGPKKERRRTESINSAFAELRECIPNVPADTKLSKIKTLRLATSYIAYL. The residue at position 110 (T110) is a Phosphothreonine; by PLK4. Position 112 is a phosphoserine; by PLK4 (S112).

As to quaternary structure, efficient DNA binding requires dimerization with another bHLH protein. Forms homodimers and heterodimers with TCF3 gene products E12 and E47, HAND2 and HEY1, HEY2 and HEYL (hairy-related transcription factors). Interacts with MDFIC. Interacts with SOX15; the interaction enhances HAND1-induced differentiation of trophoblast giant cells. Post-translationally, phosphorylation by PLK4 disrupts the interaction with MDFIC and leads to translocation into the nucleoplasm, allowing dimerization and transcription factor activity.

It localises to the nucleus. The protein resides in the nucleoplasm. It is found in the nucleolus. Its function is as follows. Transcription factor that plays an essential role in both trophoblast giant cell differentiation and in cardiac morphogenesis. Binds the DNA sequence 5'-NRTCTG-3' (non-canonical E-box). Acts as a transcriptional repressor of SOX15. In the adult, could be required for ongoing expression of cardiac-specific genes. In Bos taurus (Bovine), this protein is Heart- and neural crest derivatives-expressed protein 1 (HAND1).